The primary structure comprises 353 residues: MMTRGATRMTRTVLGHMGPRYFSTAIFRNDAGTGVMSGAAVFMHGVPANPSEKAVVTWVRHFPVMGSRSAMSMALNDKQHDKKAENGSAAATGGGDGGDEKSVVSYWGVQPSKVTKEDGTEWKWNCFRPWETYKADLSIDLTKHHAPTTFLDKFAYWTVKSLRYPTDIFFQRRYGCRAMMLETVAAVPGMVGGMLLHCKSLRRFEQSGGWIKTLLDEAENERMHLMTFMEVAKPNWYERALVFAVQGVFFNAYFVTYLLSPKLAHRIVGYLEEEAIHSYTEFLKELDKGNIENVPAPAIAIDYCRLPKDSTLLDVVLVVRADEAHHRDVNHFASDIHYQGQQLKDSPAPIGYH.

The transit peptide at 1-69 directs the protein to the mitochondrion; the sequence is MMTRGATRMT…RHFPVMGSRS (69 aa). The disordered stretch occupies residues 77–99; it reads DKQHDKKAENGSAAATGGGDGGD. A helical membrane pass occupies residues 178 to 198; sequence AMMLETVAAVPGMVGGMLLHC. Fe cation is bound by residues Glu182, Glu221, and His224. The helical transmembrane segment at 240–260 threads the bilayer; sequence ALVFAVQGVFFNAYFVTYLLS. The Fe cation site is built by Glu272, Glu323, and His326.

This sequence belongs to the alternative oxidase family. In terms of assembly, homodimer; disulfide-linked. It depends on Fe cation as a cofactor.

It is found in the mitochondrion inner membrane. The enzyme catalyses 2 a ubiquinol + O2 = 2 a ubiquinone + 2 H2O. Its activity is regulated as follows. Stimulated by reduction of the disulfide bond and the presence of pyruvate. Functionally, catalyzes the cyanide-resistant oxidation of ubiquinol and the reduction of molecular oxygen to water, but does not translocate protons and consequently is not linked to oxidative phosphorylation. May increase respiration when the cytochrome respiratory pathway is restricted, or in response to low temperatures. This Nicotiana tabacum (Common tobacco) protein is Ubiquinol oxidase 1, mitochondrial (AOX1).